We begin with the raw amino-acid sequence, 350 residues long: UDP-3-O-acylglucosamine N-acyltransferase (350 aa).

The active-site Proton acceptor is the histidine 251.

This sequence belongs to the transferase hexapeptide repeat family. LpxD subfamily. In terms of assembly, homotrimer.

It catalyses the reaction a UDP-3-O-[(3R)-3-hydroxyacyl]-alpha-D-glucosamine + a (3R)-hydroxyacyl-[ACP] = a UDP-2-N,3-O-bis[(3R)-3-hydroxyacyl]-alpha-D-glucosamine + holo-[ACP] + H(+). Its pathway is bacterial outer membrane biogenesis; LPS lipid A biosynthesis. Catalyzes the N-acylation of UDP-3-O-acylglucosamine using 3-hydroxyacyl-ACP as the acyl donor. Is involved in the biosynthesis of lipid A, a phosphorylated glycolipid that anchors the lipopolysaccharide to the outer membrane of the cell. This is UDP-3-O-acylglucosamine N-acyltransferase from Prochlorococcus marinus (strain NATL2A).